Reading from the N-terminus, the 490-residue chain is Sec sixty-one protein homolog (490 aa).

At 1-32 (MSGFRLIDIVKPILPILPEVELPFEKLPFDDK) the chain is on the cytoplasmic side. A helical transmembrane segment spans residues 33 to 53 (IVYTIFAGLIYLFAQFPLVGL). Residues 54–121 (PKATTPNVND…DRELFQSLTK (68 aa)) are Lumenal-facing. A helical membrane pass occupies residues 122–142 (VFAIVQYVILTNIFIFAGYFG). Over 143 to 146 (DDLS) the chain is Cytoplasmic. Residues 147–167 (VVQIGLINFQLVGAGIFTTLL) form a helical membrane-spanning segment. At 168 to 174 (AEVIDKG) the chain is on the lumenal side. Residues 175–195 (FGFSSGAMIINTVVIATNLVA) form a helical membrane-spanning segment. Residues 196-242 (DTFGVSQIKVGEDDQTEAQGALINLIQGLRSKHKTFIGGIISAFNRD) lie on the Cytoplasmic side of the membrane. Residues 243–263 (YLPNLTTTIIVLAIAIIVCYL) traverse the membrane as a helical segment. At 264 to 293 (QSVRVELPIRSTRARGTNNVYPIKLLYTGC) the chain is on the lumenal side. A helical membrane pass occupies residues 294–314 (LSVLFSYTILFYIHIFAFVLI). Over 315 to 339 (QLVAKNEPTHIICKIMGHYENANNL) the chain is Cytoplasmic. A helical transmembrane segment spans residues 340–360 (LAVPTFPLSLLAPPTSFFKGV). Residue Thr361 is a topological domain, lumenal. The helical transmembrane segment at 362-382 (QQPLTFITYSAFILVTGIWFA) threads the bilayer. At 383-421 (DKWQAISGSSARDVALEFKDQGITLMGRREQNVAKELNK) the chain is on the cytoplasmic side. A helical transmembrane segment spans residues 422-442 (VIPIAAVTGASVLSLITVIGE). Residues 443-449 (SLGLKGK) are Lumenal-facing. The chain crosses the membrane as a helical span at residues 450 to 470 (AAGIVVGIAGGFSLLEVITIE). Over 471–490 (YQQSGGQSALNQVLGVPGAM) the chain is Cytoplasmic.

This sequence belongs to the SecY/SEC61-alpha family. Component of the heterotrimeric Ssh1 complex, which is composed of SSH1, SBH2 and SSS1.

It localises to the endoplasmic reticulum membrane. Functionally, part of the Ssh1 complex, which probably is the major component of a channel-forming translocon complex that may function exclusively in the cotranslational pathway of protein endoplasmic reticulum (ER) import. The protein is Sec sixty-one protein homolog (SSH1) of Saccharomyces cerevisiae (strain ATCC 204508 / S288c) (Baker's yeast).